Reading from the N-terminus, the 510-residue chain is ATP synthase subunit alpha (510 aa).

169–176 is an ATP binding site; that stretch reads GDRQTGKT.

Belongs to the ATPase alpha/beta chains family. In terms of assembly, F-type ATPases have 2 components, CF(1) - the catalytic core - and CF(0) - the membrane proton channel. CF(1) has five subunits: alpha(3), beta(3), gamma(1), delta(1), epsilon(1). CF(0) has four main subunits: a(1), b(1), b'(1) and c(9-12).

It localises to the cell inner membrane. The catalysed reaction is ATP + H2O + 4 H(+)(in) = ADP + phosphate + 5 H(+)(out). Functionally, produces ATP from ADP in the presence of a proton gradient across the membrane. The alpha chain is a regulatory subunit. This chain is ATP synthase subunit alpha, found in Rhodopseudomonas palustris (strain BisA53).